The sequence spans 431 residues: Trigger factor (431 aa).

The PPIase FKBP-type domain maps to glycine 164–proline 249.

Belongs to the FKBP-type PPIase family. Tig subfamily.

It localises to the cytoplasm. The enzyme catalyses [protein]-peptidylproline (omega=180) = [protein]-peptidylproline (omega=0). Functionally, involved in protein export. Acts as a chaperone by maintaining the newly synthesized protein in an open conformation. Functions as a peptidyl-prolyl cis-trans isomerase. The polypeptide is Trigger factor (Clostridium tetani (strain Massachusetts / E88)).